The chain runs to 177 residues: MTNTCTPNHKSSYTYEDLLASGRGELFGPKGPQLPAPTMLMMDRVIEMNETGGQYGKGYVEAELDIKPDLFFFGCHFIGDPVMPGCLGLDAMWQLVGFYLGWIGGEGKGRALGVGEVKFTGQVLPTAKKVTYRIHLKRVINRKLIMGVADGEVEVDGRVIYTATDLKVGLFQDTSTF.

His-76 is a catalytic residue.

This sequence belongs to the thioester dehydratase family. FabA subfamily. In terms of assembly, homodimer.

Its subcellular location is the cytoplasm. The enzyme catalyses a (3R)-hydroxyacyl-[ACP] = a (2E)-enoyl-[ACP] + H2O. The catalysed reaction is (3R)-hydroxydecanoyl-[ACP] = (2E)-decenoyl-[ACP] + H2O. It catalyses the reaction (2E)-decenoyl-[ACP] = (3Z)-decenoyl-[ACP]. Its pathway is lipid metabolism; fatty acid biosynthesis. Its function is as follows. Necessary for the introduction of cis unsaturation into fatty acids. Catalyzes the dehydration of (3R)-3-hydroxydecanoyl-ACP to E-(2)-decenoyl-ACP and then its isomerization to Z-(3)-decenoyl-ACP. Can catalyze the dehydratase reaction for beta-hydroxyacyl-ACPs with saturated chain lengths up to 16:0, being most active on intermediate chain length. The chain is 3-hydroxydecanoyl-[acyl-carrier-protein] dehydratase from Actinobacillus succinogenes (strain ATCC 55618 / DSM 22257 / CCUG 43843 / 130Z).